A 411-amino-acid chain; its full sequence is Mitogen-activated protein kinase 8 (411 aa).

The region spanning 26 to 321 is the Protein kinase domain; that stretch reads YQNLKPIGSG…VDEALQHPYI (296 aa). ATP is bound by residues 32 to 40 and K55; that span reads IGSGAQGIV. C116 carries the S-nitrosocysteine; in inhibited form modification. The active-site Proton acceptor is D151. The residue at position 183 (T183) is a Phosphothreonine; by MAP2K7. Residues 183–185 carry the TXY motif; that stretch reads TPY. At Y185 the chain carries Phosphotyrosine; by MAP2K4. The tract at residues 368 to 411 is disordered; it reads KNGVIRGQPSPLGAAVINGSQHPVSSPSVNDMSSMSTDPTLASD. S377 bears the Phosphoserine mark. The segment covering 390 to 403 has biased composition (low complexity); it reads PVSSPSVNDMSSMS.

This sequence belongs to the protein kinase superfamily. CMGC Ser/Thr protein kinase family. MAP kinase subfamily. In terms of assembly, forms a complex with MAPK8IP1 and ARHGEF28. Found in a complex with SH3RF1, RAC1, MAP3K11/MLK3, MAP2K7/MKK7 and MAPK8IP1/JIP1. Found in a complex with SH3RF1, RAC2, MAP3K7/TAK1, MAP2K7/MKK7, MAPK8IP1/JIP1 and MAPK9/JNK2. Binds to at least four scaffolding proteins, MAPK8IP1/JIP-1, MAPK8IP2/JIP-2, MAPK8IP3/JIP-3/JSAP1 and SPAG9/MAPK8IP4/JIP-4. These proteins also bind other components of the JNK signaling pathway. Interacts with TP53, WWOX. Interacts with JAMP. Interacts with NFATC4. Interacts (phosphorylated form) with NFE2; the interaction phosphorylates NFE2 in undifferentiated cells. Interacts with MECOM; regulates JNK signaling. Interacts with PIN1; this interaction mediates MAPK8 conformational changes leading to the binding of MAPK8 to its substrates. Interacts with HSF1 (via D domain and preferentially with hyperphosphorylated form); this interaction occurs under both normal growth conditions and immediately upon heat shock. Interacts with STMN2, STMN3 and STMN4. Interacts with GRIPAP1. Interacts with POU5F1; phosphorylates POU5F1 at 'Ser-347'. Interacts with HSF4. It depends on Mg(2+) as a cofactor. Dually phosphorylated on Thr-183 and Tyr-185 by MAP2K7 and MAP2K4, which activates the enzyme. Phosphorylated by TAOK2. Phosphorylated form is more concentrated at synapses than none-phosphorylated. Post-translationally, nitrosylated upon IFN-gamma-induced endogenous NO production, which inhibits the enzyme. May be phosphorylated at Thr-183 and Tyr-185 by MAP3K1/MEKK1.

The protein localises to the cytoplasm. The protein resides in the nucleus. Its subcellular location is the synapse. It catalyses the reaction L-seryl-[protein] + ATP = O-phospho-L-seryl-[protein] + ADP + H(+). It carries out the reaction L-threonyl-[protein] + ATP = O-phospho-L-threonyl-[protein] + ADP + H(+). With respect to regulation, activated by threonine and tyrosine phosphorylation by either of two dual specificity kinases, MAP2K4 and MAP2K7. MAP2K4 shows a strong preference for Tyr-185 while MAP2K7 phosphorylates Tyr-183 preferentially. Inhibited by dual specificity phosphatases, such as DUSP1. Inhibited by SERPINB3. Inhibited by IFN-gamma-induced S-nitrosylation. Serine/threonine-protein kinase involved in various processes such as cell proliferation, differentiation, migration, transformation and programmed cell death. Extracellular stimuli such as pro-inflammatory cytokines or physical stress stimulate the stress-activated protein kinase/c-Jun N-terminal kinase (SAP/JNK) signaling pathway. In this cascade, two dual specificity kinases MAP2K4/MKK4 and MAP2K7/MKK7 phosphorylate and activate MAPK8/JNK1. In turn, MAPK8/JNK1 phosphorylates a number of transcription factors, primarily components of AP-1 such as JUN, JDP2 and ATF2 and thus regulates AP-1 transcriptional activity. Phosphorylates the replication licensing factor CDT1, inhibiting the interaction between CDT1 and the histone H4 acetylase HBO1 to replication origins. Loss of this interaction abrogates the acetylation required for replication initiation. Promotes stressed cell apoptosis by phosphorylating key regulatory factors including p53/TP53 and Yes-associates protein YAP1. In T-cells, MAPK8 and MAPK9 are required for polarized differentiation of T-helper cells into Th1 cells. Contributes to the survival of erythroid cells by phosphorylating the antagonist of cell death BAD upon EPO stimulation. Mediates starvation-induced BCL2 phosphorylation, BCL2 dissociation from BECN1, and thus activation of autophagy. Phosphorylates STMN2 and hence regulates microtubule dynamics, controlling neurite elongation in cortical neurons. In the developing brain, through its cytoplasmic activity on STMN2, negatively regulates the rate of exit from multipolar stage and of radial migration from the ventricular zone. Phosphorylates several other substrates including heat shock factor protein 4 (HSF4), the deacetylase SIRT1, ELK1, or the E3 ligase ITCH. Phosphorylates the CLOCK-BMAL1 heterodimer and plays a role in the regulation of the circadian clock. Phosphorylates the heat shock transcription factor HSF1, suppressing HSF1-induced transcriptional activity. Phosphorylates POU5F1, which results in the inhibition of POU5F1's transcriptional activity and enhances its proteasomal degradation. Phosphorylates JUND and this phosphorylation is inhibited in the presence of MEN1. In neurons, phosphorylates SYT4 which captures neuronal dense core vesicles at synapses. Phosphorylates EIF4ENIF1/4-ET in response to oxidative stress, promoting P-body assembly. Phosphorylates SIRT6 in response to oxidative stress, stimulating its mono-ADP-ribosyltransferase activity. Phosphorylates NLRP3, promoting assembly of the NLRP3 inflammasome. Phosphorylates ALKBH5 in response to reactive oxygen species (ROS), promoting ALKBH5 sumoylation and inactivation. This is Mitogen-activated protein kinase 8 (Mapk8) from Rattus norvegicus (Rat).